Reading from the N-terminus, the 296-residue chain is LysM and putative peptidoglycan-binding domain-containing protein 4 (296 aa).

Residues 1–217 lie on the Extracellular side of the membrane; it reads MRHEELLTKT…PMDGADCGIQ (217 aa). Residues 29–67 form a disordered region; the sequence is KNGSGDSGDSSEEESHRVVLRPRGKERHKSGVHQPPQAG. Residue Asn30 is glycosylated (N-linked (GlcNAc...) asparagine). A compositionally biased stretch (basic residues) spans 46–59; it reads VVLRPRGKERHKSG. A LysM domain is found at 74 to 118; sequence LQRELAQEDSLNKLALQYGCKVADIKKVNNFIREQDLYALKSVKI. A helical transmembrane segment spans residues 218 to 238; that stretch reads WWNAVFIMLLIGIVLPVFYLV. The Cytoplasmic segment spans residues 239–296; it reads YFKIQASGETPNSLNTTVIPNGSMAMGTVPGQAPRLAVAVPAVTSADSQFSQTTQAGS.

It is found in the membrane. The chain is LysM and putative peptidoglycan-binding domain-containing protein 4 (LYSMD4) from Homo sapiens (Human).